The sequence spans 290 residues: Lipoyl synthase (290 aa).

Positions 34, 39, 45, 60, 64, 67, and 273 each coordinate [4Fe-4S] cluster. One can recognise a Radical SAM core domain in the interval 46 to 262 (WNKRHATVMI…KYIAYSKGFL (217 aa)).

This sequence belongs to the radical SAM superfamily. Lipoyl synthase family. It depends on [4Fe-4S] cluster as a cofactor.

The protein resides in the cytoplasm. The catalysed reaction is [[Fe-S] cluster scaffold protein carrying a second [4Fe-4S](2+) cluster] + N(6)-octanoyl-L-lysyl-[protein] + 2 oxidized [2Fe-2S]-[ferredoxin] + 2 S-adenosyl-L-methionine + 4 H(+) = [[Fe-S] cluster scaffold protein] + N(6)-[(R)-dihydrolipoyl]-L-lysyl-[protein] + 4 Fe(3+) + 2 hydrogen sulfide + 2 5'-deoxyadenosine + 2 L-methionine + 2 reduced [2Fe-2S]-[ferredoxin]. It participates in protein modification; protein lipoylation via endogenous pathway; protein N(6)-(lipoyl)lysine from octanoyl-[acyl-carrier-protein]: step 2/2. Its function is as follows. Catalyzes the radical-mediated insertion of two sulfur atoms into the C-6 and C-8 positions of the octanoyl moiety bound to the lipoyl domains of lipoate-dependent enzymes, thereby converting the octanoylated domains into lipoylated derivatives. The chain is Lipoyl synthase from Wolbachia pipientis subsp. Culex pipiens (strain wPip).